The sequence spans 86 residues: Protein IDA-LIKE 1 (86 aa).

The N-terminal stretch at 1–27 is a signal peptide; that stretch reads MNLSHKTMFMTLYIVFLLIFGSYNATA.

As to expression, expressed in roots.

The protein resides in the secreted. Its subcellular location is the extracellular space. In terms of biological role, involved in an ethylene-independent separation step of floral abscission. May act with RLK5 and HSL2 as ligand-receptor pairs. The sequence is that of Protein IDA-LIKE 1 (IDL1) from Arabidopsis thaliana (Mouse-ear cress).